The sequence spans 360 residues: Phosphoserine aminotransferase (360 aa).

Residue arginine 42 coordinates L-glutamate. Residues 76 to 77 (AR), tryptophan 102, threonine 153, aspartate 172, and glutamine 195 contribute to the pyridoxal 5'-phosphate site. Lysine 196 carries the N6-(pyridoxal phosphate)lysine modification. 237-238 (NT) provides a ligand contact to pyridoxal 5'-phosphate.

It belongs to the class-V pyridoxal-phosphate-dependent aminotransferase family. SerC subfamily. In terms of assembly, homodimer. The cofactor is pyridoxal 5'-phosphate.

It is found in the cytoplasm. It catalyses the reaction O-phospho-L-serine + 2-oxoglutarate = 3-phosphooxypyruvate + L-glutamate. It carries out the reaction 4-(phosphooxy)-L-threonine + 2-oxoglutarate = (R)-3-hydroxy-2-oxo-4-phosphooxybutanoate + L-glutamate. It participates in amino-acid biosynthesis; L-serine biosynthesis; L-serine from 3-phospho-D-glycerate: step 2/3. The protein operates within cofactor biosynthesis; pyridoxine 5'-phosphate biosynthesis; pyridoxine 5'-phosphate from D-erythrose 4-phosphate: step 3/5. In terms of biological role, catalyzes the reversible conversion of 3-phosphohydroxypyruvate to phosphoserine and of 3-hydroxy-2-oxo-4-phosphonooxybutanoate to phosphohydroxythreonine. This chain is Phosphoserine aminotransferase, found in Aliivibrio fischeri (strain ATCC 700601 / ES114) (Vibrio fischeri).